A 354-amino-acid polypeptide reads, in one-letter code: UDP-N-acetylglucosamine--N-acetylmuramyl-(pentapeptide) pyrophosphoryl-undecaprenol N-acetylglucosamine transferase (354 aa).

Residues 15-17 (TGG), asparagine 127, arginine 163, serine 191, isoleucine 244, 263-268 (ALTVSE), and glutamine 288 each bind UDP-N-acetyl-alpha-D-glucosamine.

This sequence belongs to the glycosyltransferase 28 family. MurG subfamily.

It localises to the cell inner membrane. The catalysed reaction is di-trans,octa-cis-undecaprenyl diphospho-N-acetyl-alpha-D-muramoyl-L-alanyl-D-glutamyl-meso-2,6-diaminopimeloyl-D-alanyl-D-alanine + UDP-N-acetyl-alpha-D-glucosamine = di-trans,octa-cis-undecaprenyl diphospho-[N-acetyl-alpha-D-glucosaminyl-(1-&gt;4)]-N-acetyl-alpha-D-muramoyl-L-alanyl-D-glutamyl-meso-2,6-diaminopimeloyl-D-alanyl-D-alanine + UDP + H(+). It participates in cell wall biogenesis; peptidoglycan biosynthesis. Functionally, cell wall formation. Catalyzes the transfer of a GlcNAc subunit on undecaprenyl-pyrophosphoryl-MurNAc-pentapeptide (lipid intermediate I) to form undecaprenyl-pyrophosphoryl-MurNAc-(pentapeptide)GlcNAc (lipid intermediate II). This Vibrio cholerae serotype O1 (strain ATCC 39315 / El Tor Inaba N16961) protein is UDP-N-acetylglucosamine--N-acetylmuramyl-(pentapeptide) pyrophosphoryl-undecaprenol N-acetylglucosamine transferase.